The following is an 800-amino-acid chain: Leukocyte receptor cluster member 8 homolog (800 aa).

5 disordered regions span residues 118–149, 175–229, 245–273, 335–394, and 407–519; these read NYQS…MSYS, PCIQ…GFKF, SSEH…PQQQ, TIDW…GRGS, and KESS…HGHG. 2 stretches are compositionally biased toward low complexity: residues 120–131 and 184–201; these read QSMSSQSGQHQG and NQSN…SQQS. A compositionally biased stretch (polar residues) spans 252–261; it reads SAGQQQQQAT. Over residues 338 to 352 the composition is skewed to basic and acidic residues; it reads WSREPLPGKDGGKES. Residues 360–387 are compositionally biased toward polar residues; that stretch reads QTTLQTSHGSTITITQSPRGGGNSTNAA. Residues 409–418 show a composition bias toward low complexity; that stretch reads SSSSSSAGSR. Composition is skewed to basic residues over residues 419–433 and 508–519; these read SRSR…RRYR and EKRAARFQHGHG. Residues 636–800 form the PCI domain; it reads DHEEFNQCQA…KLSLAVLPNI (165 aa).

The polypeptide is Leukocyte receptor cluster member 8 homolog (leng8) (Xenopus laevis (African clawed frog)).